Here is a 346-residue protein sequence, read N- to C-terminus: LRP2-binding protein (346 aa).

A TPR repeat occupies 58-91; that stretch reads AMAYFLRGQLYFEEGWYEEALAQFEEIQEKDHQA. 6 Sel1-like repeats span residues 92–124, 132–167, 172–205, 206–241, 242–276, and 296–331; these read IYQLGVMYYDGLGTVADAEKGVGYMKKILDSSC, FAAAYNLGRAYFEGKGVKRSDEEAERLWLYAADNGN, VKAQSILGLFYSMKEPKDLEKAFFWHSEACGNGN, LESQGALGLMYLYGQGIRQDTDAALHCLREAAERGN, VYAQGILVEYYYKMKFFTKCVSFSKRIADYDEVHD, and AMASFYYARCLQLGLGITKDEASAKHYYSKACRLNP.

As to quaternary structure, interacts with LRP2.

It localises to the cytoplasm. May act as an adapter that regulates LRP2 function. This Rattus norvegicus (Rat) protein is LRP2-binding protein (Lrp2bp).